The primary structure comprises 308 residues: Pantothenate kinase (308 aa).

91–98 (GSVAVGKS) lines the ATP pocket.

It belongs to the prokaryotic pantothenate kinase family.

The protein localises to the cytoplasm. The catalysed reaction is (R)-pantothenate + ATP = (R)-4'-phosphopantothenate + ADP + H(+). It participates in cofactor biosynthesis; coenzyme A biosynthesis; CoA from (R)-pantothenate: step 1/5. The chain is Pantothenate kinase from Lacticaseibacillus paracasei (strain ATCC 334 / BCRC 17002 / CCUG 31169 / CIP 107868 / KCTC 3260 / NRRL B-441) (Lactobacillus paracasei).